We begin with the raw amino-acid sequence, 600 residues long: Proton channel OTOP1 (600 aa).

The disordered stretch occupies residues 1–50 (MPGDRGALSSPAASSGSPSAAPSGIAACPPPPSPLARASPQASGPRRGAS). Over 1–56 (MPGDRGALSSPAASSGSPSAAPSGIAACPPPPSPLARASPQASGPRRGASVPQKLA) the chain is Cytoplasmic. A compositionally biased stretch (low complexity) spans 7–27 (ALSSPAASSGSPSAAPSGIAA). Residues 57–78 (ETLSSQYGLNVFVAGLLFLLAW) traverse the membrane as a helical segment. Residues 79–86 (AVHATGVG) lie on the Extracellular side of the membrane. Residues 87–110 (KSDLLCVLTALMLLQLLWMLWYVG) traverse the membrane as a helical segment. Topologically, residues 111–128 (RSYMQRRLIRPKDTHAGA) are cytoplasmic. The chain crosses the membrane as a helical span at residues 129–151 (RWLRGSITLFAFITIVLGCLKVA). Residues 152–161 (YFIGFSECLS) lie on the Extracellular side of the membrane. The chain crosses the membrane as a helical span at residues 162–186 (ATEGVFPVTHAVHTLLQVYFLWGHA). Residues 187-194 (KDIIMSFK) are Cytoplasmic-facing. The helical transmembrane segment at 195–221 (TLERFGVIHSVFTNLLLWANSVLNESK) threads the bilayer. The Extracellular portion of the chain corresponds to 222-262 (HQLNEHKERLITLGFGNITIVLDDHTPQCNCTPPALCSALS). The helical transmembrane segment at 263–288 (HGIYYLYPFNIEYQILASTMLYVLWK) threads the bilayer. Residues 289 to 309 (NIGRRVDSSRHQKMQCRFDGV) are Cytoplasmic-facing. Residues 310-332 (LVGSVLGLTVLAATIAVVVVYMI) form a helical membrane-spanning segment. The Extracellular portion of the chain corresponds to 333–342 (HIGRSKSKSE). A helical transmembrane segment spans residues 343-368 (SALIMFYLYAITVLLLMGAAGLVGSW). Residues 369-386 (IYRVDEKSLDESKNPARK) lie on the Cytoplasmic side of the membrane. A helical transmembrane segment spans residues 387–411 (LDADLLVATASGSWLLSWGSILAIA). The Extracellular segment spans residues 412–421 (CAETRPPYTW). A helical transmembrane segment spans residues 422–442 (YNLPYSVLVIVEKYVQNIFII). The Cytoplasmic portion of the chain corresponds to 443–532 (ESVHLEPEGV…QGGMKRRLLR (90 aa)). Residues 533–551 (NITAFLFLCNISLWIPPAF) traverse the membrane as a helical segment. Residues 552–569 (GCRPEYDNGLEEIVFGFE) are Extracellular-facing. Residues 570–593 (PWIIVVNLAMPFSIFYRMHAAAAL) form a helical membrane-spanning segment. The Cytoplasmic segment spans residues 594–600 (FEVYCKI).

It belongs to the otopetrin family. Homodimer. Interacts with STAT1, independently of STAT1 phosphorylation status.

Its subcellular location is the cell membrane. The protein localises to the cell projection. The protein resides in the microvillus. It carries out the reaction H(+)(in) = H(+)(out). With respect to regulation, activated by both acid and alkali, with proton influx in response to extracellular acid and proton efflux during alkali stimulation. Inhibited by Zn(2+); this inhibition is thought to be pH-sensitive. Currents evoked in response to mild acid (pH 6.0) stimulus may also be mildly potentiated by exposure to Zn(2+). Activated by NH(4)Cl. Functionally, proton-selective ion channel. Biphasically modulated by acid and alkali, mediating proton influx and efflux in response to extracellular acid and base stimulation, respectively. Sour taste receptor, which carries inward currents in response to extracellular acidification. Sensor for ammonium chloride (NH(4)Cl) in taste receptor cells. NH(4)Cl acts by increasing the intracellular pH, thereby generating a driving force for proton entry through OTOP1 channel. Might also participate in alkaline sensation. Plays a role in the regulation of Ca(2+) flux in response to purigenic (ATP, ADP and UDP) stimuli, leading to increase in cytosolic Ca(2+) due to influx of extracellular calcium. May play this role by inhibiting P2Y purinoceptor-mediated Ca(2+) release in a Ca(2+)-dependent manner and promote an influx of Ca(2+) in response to ATP. Through this mechanism and possibly others, plays a role in the formation and function of calcium carbonate-based structures in the vestibular system of the inner ear, called otoconia, that sense gravity and linear acceleration. In obesity, may attenuate adipose tissue inflammation, through the negative regulation of IFNG signaling, hence may play an adaptive role in the maintainance of metabolic homeostasis. Following alkali activation, may also be permeable Na(+), K(+), Cs(+) and Li(+). The sequence is that of Proton channel OTOP1 from Rattus norvegicus (Rat).